The chain runs to 252 residues: Phosphate import ATP-binding protein PstB 1 (252 aa).

Residues Ile6–Ile247 enclose the ABC transporter domain. Gly38–Ser45 lines the ATP pocket.

This sequence belongs to the ABC transporter superfamily. Phosphate importer (TC 3.A.1.7) family. The complex is composed of two ATP-binding proteins (PstB), two transmembrane proteins (PstC and PstA) and a solute-binding protein (PstS).

The protein localises to the cell membrane. It carries out the reaction phosphate(out) + ATP + H2O = ADP + 2 phosphate(in) + H(+). Functionally, part of the ABC transporter complex PstSACB involved in phosphate import. Responsible for energy coupling to the transport system. The protein is Phosphate import ATP-binding protein PstB 1 of Enterococcus faecalis (strain ATCC 700802 / V583).